Here is a 297-residue protein sequence, read N- to C-terminus: tRNA dimethylallyltransferase (297 aa).

Gly-8–Ser-15 contacts ATP. Thr-10–Ser-15 contributes to the substrate binding site. The interaction with substrate tRNA stretch occupies residues Asp-33 to Ser-36.

Belongs to the IPP transferase family. As to quaternary structure, monomer. Mg(2+) is required as a cofactor.

The enzyme catalyses adenosine(37) in tRNA + dimethylallyl diphosphate = N(6)-dimethylallyladenosine(37) in tRNA + diphosphate. Functionally, catalyzes the transfer of a dimethylallyl group onto the adenine at position 37 in tRNAs that read codons beginning with uridine, leading to the formation of N6-(dimethylallyl)adenosine (i(6)A). This chain is tRNA dimethylallyltransferase, found in Sulfurimonas denitrificans (strain ATCC 33889 / DSM 1251) (Thiomicrospira denitrificans (strain ATCC 33889 / DSM 1251)).